A 660-amino-acid chain; its full sequence is Ankyrin repeat domain-containing protein OPG023 (660 aa).

9 ANK repeats span residues 31–64 (FKNN…PLHK), 101–131 (NDFN…DLSV), 135–166 (NHRS…SVLY), 190–222 (YIIA…KPSS), 226–257 (NYCT…NTAY), 268–302 (RGIM…PYGI), 325–359 (NSDV…VVNK), 449–478 (RGET…DVNI), and 482–512 (NGYT…TLDC). Positions 578–658 (NTMFSLIFTE…PYTIKYKIFE (81 aa)) are PRANC/F-box-like.

The protein belongs to the orthopoxvirus OPG023 family. In terms of assembly, interacts (via N-terminus) with host RELA. Interacts (via PRANC/F-box-like domain) with the SKP1 component of the host SCF ubiquitin ligase complex.

Substrate-specific adapter of SKP1-containing E3 ubiquitin-protein ligases which mediate the ubiquitination and subsequent proteasomal degradation of host target proteins. Prevents activation and subsequent nuclear localization of NF-kappa-B in infected cells, by targeting NF-kappa-B RELA subunit to the SCF E3 ligase complex. This Cynomys gunnisoni (Gunnison's prairie dog) protein is Ankyrin repeat domain-containing protein OPG023 (OPG023).